The sequence spans 834 residues: Striatin-interacting protein 2 (834 aa).

The interval 1-48 (MEDPAAPGTGGPPANGNGNGGGKGKQAAPKGREAFRSQRRESEGSVDC) is disordered. Positions 8 to 24 (GTGGPPANGNGNGGGKG) are enriched in gly residues. A compositionally biased stretch (basic and acidic residues) spans 30 to 43 (KGREAFRSQRRESE). Residues S318, S329, and S354 each carry the phosphoserine modification. The disordered stretch occupies residues 321–345 (SYTLDLGESQLAPPPSKLRGRRGSR). The segment at 360-382 (ERDLFKTEEPATEEEEESAGDGE) is disordered. Over residues 369-379 (PATEEEEESAG) the composition is skewed to acidic residues.

Belongs to the STRIP family. As to quaternary structure, part of the core of STRIPAK complexes composed of PP2A catalytic and scaffolding subunits, the striatins (PP2A regulatory subunits), the striatin-associated proteins MOB4, STRIP1 and STRIP2, PDCD10 and members of the STE20 kinases, such as STK24 and STK26. Interacts with CTTNBP2NL.

The protein resides in the cytoplasm. Plays a role in the regulation of cell morphology and cytoskeletal organization. Required in the control of cell shape. Calmodulin-binding scaffolding protein which is the center of the striatin-interacting phosphatase and kinase (STRIPAK) complexes. STRIPAK complexes have critical roles in protein (de)phosphorylation and are regulators of multiple signaling pathways including Hippo, MAPK, nuclear receptor and cytoskeleton remodeling. Different types of STRIPAK complexes are involved in a variety of biological processes such as cell growth, differentiation, apoptosis, metabolism and immune regulation. This Homo sapiens (Human) protein is Striatin-interacting protein 2.